Consider the following 85-residue polypeptide: Cell division topological specificity factor (85 aa).

This sequence belongs to the MinE family.

Prevents the cell division inhibition by proteins MinC and MinD at internal division sites while permitting inhibition at polar sites. This ensures cell division at the proper site by restricting the formation of a division septum at the midpoint of the long axis of the cell. The polypeptide is Cell division topological specificity factor (Shewanella amazonensis (strain ATCC BAA-1098 / SB2B)).